Reading from the N-terminus, the 120-residue chain is Small ribosomal subunit protein bS16 (120 aa).

A disordered region spans residues 81–120; it reads GLAKRPARNNPQKAEPGEKAKERAAKRAEKAAAPAEDAAA. The span at 95-110 shows a compositional bias: basic and acidic residues; that stretch reads EPGEKAKERAAKRAEK. Over residues 111–120 the composition is skewed to low complexity; it reads AAAPAEDAAA.

Belongs to the bacterial ribosomal protein bS16 family.

This is Small ribosomal subunit protein bS16 from Methylobacterium radiotolerans (strain ATCC 27329 / DSM 1819 / JCM 2831 / NBRC 15690 / NCIMB 10815 / 0-1).